Here is a 71-residue protein sequence, read N- to C-terminus: Disintegrin ussuristatin-2 (71 aa).

In terms of domain architecture, Disintegrin spans 1–71 (EAGEECDCGA…QSADCPRNGF (71 aa)). 6 disulfide bridges follow: Cys6-Cys21, Cys8-Cys16, Cys15-Cys38, Cys29-Cys35, Cys34-Cys59, and Cys47-Cys66. The short motif at 51 to 53 (KGD) is the Cell attachment site; atypical (KGD) element.

The protein belongs to the venom metalloproteinase (M12B) family. P-II subfamily. P-IId sub-subfamily. As to quaternary structure, homodimer. In terms of tissue distribution, expressed by the venom gland.

The protein localises to the secreted. In terms of biological role, suppress platelet aggregation induced by ADP, collagen, thrombin, and epinephrine (IC(50)=170-330 nM). Also dose-dependently inhibits the adhesion of human melanoma cells to fibrinogen but not to fibronectin. In Gloydius ussuriensis (Ussuri mamushi), this protein is Disintegrin ussuristatin-2.